A 418-amino-acid polypeptide reads, in one-letter code: Aspartate aminotransferase 1 (418 aa).

N6-(pyridoxal phosphate)lysine is present on Lys-264.

This sequence belongs to the class-I pyridoxal-phosphate-dependent aminotransferase family. As to quaternary structure, homodimer. Pyridoxal 5'-phosphate serves as cofactor. Nodules, roots, stems and leaves, in decreasing order of aspartate aminotransferase 1 concentration. Is the predominant aspartate aminotransferase isoenzyme in roots.

The protein resides in the cytoplasm. The enzyme catalyses L-aspartate + 2-oxoglutarate = oxaloacetate + L-glutamate. Important for the metabolism of amino acids and Krebs-cycle related organic acids. In plants, it is involved in nitrogen metabolism and in aspects of carbon and energy metabolism. The sequence is that of Aspartate aminotransferase 1 (AAT-1) from Medicago sativa (Alfalfa).